We begin with the raw amino-acid sequence, 68 residues long: Conotoxin Pu5.5 (68 aa).

An N-terminal signal peptide occupies residues 1 to 22 (MRCVPVFIILLVLIASAPSVDA). A propeptide spanning residues 23-49 (RPQTKDDALASFRDSIKRHLQTLLDAR) is cleaved from the precursor.

The protein belongs to the conotoxin T superfamily. Contains 2 disulfide bonds that can be either 'C1-C3, C2-C4' or 'C1-C4, C2-C3', since these disulfide connectivities have been observed for conotoxins with cysteine framework V (for examples, see AC P0DQQ7 and AC P81755). As to expression, expressed by the venom duct.

The protein resides in the secreted. This is Conotoxin Pu5.5 from Conus pulicarius (Flea-bitten cone).